We begin with the raw amino-acid sequence, 526 residues long: MDAENKKGIGLAALVAIIVSGAIGGGVFNLSNDLATNASPGGVVISWIVIGFGILMLVLSLNHLVVNKPELSGVSDYARAGFGNMVGFISGWGYWLSAWAGNIAFAVLMMTSVDYFFPGVFQAKNGSLTILSVIVVSIVSWGLTLLVMRGVEGAAAINAIVLVAKLIPLFVFVIAGIVTFKAGVFSAHFWQNFVANTNADGVIKSLTWSNMTGGDLFSQVKGSLMVMIWVFVGIEGAAMMGDRAKRKSDAGKASIFGLIALLVIYILLSLLPFGFMSQQELANTGQPGLVHILNAMVGGWGGSLMAIGLVISLLGAWLSWTMLPVEATQQLSEQKLLPSWFGKLNDKGAPKNSLLLTQLIVQIFLIVTYFVADAYNVFVYLCTAVIMICYALVGLYLFKLGIQEKKTSNIIIGFIAAAFQILALYYSGWQFVWLSLILYAVGFILYALGKKEYGTKMSTTEVIATFILTVLGILAVFGVYGNWLGLQDALGIDGNTLLVAVVPLIVVTFIVYFVVRSDINKKGIKN.

The next 14 membrane-spanning stretches (helical) occupy residues Gly8 to Phe28, Gly41 to Leu61, Phe88 to Leu108, Leu128 to Met148, Ile160 to Phe180, Val220 to Met240, Ile255 to Phe275, Val297 to Trp317, Leu354 to Ala374, Phe378 to Phe398, Thr407 to Ser427, Gly428 to Leu448, Phe466 to Leu486, and Asn495 to Val515.

The protein belongs to the amino acid-polyamine-organocation (APC) superfamily. Basic amino acid/polyamine antiporter (APA) (TC 2.A.3.2) family.

Its subcellular location is the cell membrane. The catalysed reaction is L-ornithine(in) + L-arginine(out) = L-ornithine(out) + L-arginine(in). In terms of biological role, catalyzes electroneutral exchange between L-arginine and L-ornithine. Can also efficiently translocate L-histidine and L-lysine. ArcD1 is the main L-arginine/L-ornithine exchanger in the arginine deiminase (ADI) pathway. The polypeptide is Arginine/ornithine antiporter ArcD1 (Lactococcus lactis subsp. cremoris (strain MG1363)).